The sequence spans 348 residues: MDEWLAEFIKRTILKLPFSETVTILKAWGFLTESELQTFTFRYPKDVTATEVVRLCEAKNATVDHAAALDLVFNHAYSNKKSWTVYQMSKPSESENDLFDASEFKLQFKKSIHAVSKNVTLNFKQFGEALWIRIAWGTHNTRPNQYKATFAVYHSQTPYVFITGLGKACRPLMCQALVIAAKYSQIQEMELKSRCLESLKDIVFKRFNQPFSSHHSIPHEKALIPKIVDPRVIYENMREKDRVSHLTRETFGEGPLPKLELASYKLETMFRAESIMDGNLTAVNEPFRCVVKFSSPHLLEAIRSLAPAGIAEAPISTLLSCIPHKARNSFKITEKRGMHPTSSQTTNF.

This sequence belongs to the CENP-N/CHL4 family.

Its subcellular location is the nucleus. The protein localises to the chromosome. It is found in the centromere. Probable component of a centromeric complex involved in assembly of kinetochore proteins, mitotic progression and chromosome segregation. The chain is Centromere protein N-A (cenpn-a) from Xenopus laevis (African clawed frog).